Here is a 78-residue protein sequence, read N- to C-terminus: uncharacterized protein (78 aa).

A helical transmembrane segment spans residues S13–A33.

It localises to the membrane. This is an uncharacterized protein from Methanocaldococcus jannaschii (strain ATCC 43067 / DSM 2661 / JAL-1 / JCM 10045 / NBRC 100440) (Methanococcus jannaschii).